A 584-amino-acid polypeptide reads, in one-letter code: UvrABC system protein C (584 aa).

Residues 12–89 (NKPGCYLFLN…IKKYRPKYNV (78 aa)) enclose the GIY-YIG domain. The UVR domain maps to 194-229 (NQVKQTLVKQMQKASDNLQFEQAKRIKDQITSLDFI).

This sequence belongs to the UvrC family. Interacts with UvrB in an incision complex.

It localises to the cytoplasm. Its function is as follows. The UvrABC repair system catalyzes the recognition and processing of DNA lesions. UvrC both incises the 5' and 3' sides of the lesion. The N-terminal half is responsible for the 3' incision and the C-terminal half is responsible for the 5' incision. The sequence is that of UvrABC system protein C from Mycoplasma capricolum subsp. capricolum (strain California kid / ATCC 27343 / NCTC 10154).